The following is a 265-amino-acid chain: Pyrroline-5-carboxylate reductase (265 aa).

The protein belongs to the pyrroline-5-carboxylate reductase family.

Its subcellular location is the cytoplasm. The catalysed reaction is L-proline + NADP(+) = (S)-1-pyrroline-5-carboxylate + NADPH + 2 H(+). The enzyme catalyses L-proline + NAD(+) = (S)-1-pyrroline-5-carboxylate + NADH + 2 H(+). It participates in amino-acid biosynthesis; L-proline biosynthesis; L-proline from L-glutamate 5-semialdehyde: step 1/1. In terms of biological role, catalyzes the reduction of 1-pyrroline-5-carboxylate (PCA) to L-proline. The sequence is that of Pyrroline-5-carboxylate reductase from Aquifex aeolicus (strain VF5).